Consider the following 103-residue polypeptide: Large ribosomal subunit protein bL21 (103 aa).

Belongs to the bacterial ribosomal protein bL21 family. In terms of assembly, part of the 50S ribosomal subunit. Contacts protein L20.

Its function is as follows. This protein binds to 23S rRNA in the presence of protein L20. The protein is Large ribosomal subunit protein bL21 of Vibrio parahaemolyticus serotype O3:K6 (strain RIMD 2210633).